Here is a 341-residue protein sequence, read N- to C-terminus: Limbic system-associated membrane protein (341 aa).

The N-terminal stretch at 1–28 (MVGRVQPDRKQLPLVLLRLLCLLPTGLP) is a signal peptide. 3 consecutive Ig-like domains span residues 29-122 (VRSV…PKTS), 132-214 (PKIS…VKVT), and 219-304 (PTIT…ASLV). 2 N-linked (GlcNAc...) asparagine glycosylation sites follow: N40 and N66. The cysteines at positions 53 and 111 are disulfide-linked. A Phosphotyrosine modification is found at Y94. N-linked (GlcNAc...) asparagine glycans are attached at residues N136 and N148. 2 disulfides stabilise this stretch: C153/C197 and C239/C290. N279, N287, and N300 each carry an N-linked (GlcNAc...) asparagine glycan.

The protein belongs to the immunoglobulin superfamily. IgLON family.

The protein localises to the cell membrane. Its function is as follows. Mediates selective neuronal growth and axon targeting. Contributes to the guidance of developing axons and remodeling of mature circuits in the limbic system. Essential for normal growth of the hippocampal mossy fiber projection. This is Limbic system-associated membrane protein (Lsamp) from Mus musculus (Mouse).